The chain runs to 558 residues: MEKQWWKESVVYQIYPRSFMDSNGDGIGDLRGIISKLDYLKELGIDVIWLSPVYESPNDDNGYDISDYCKIMNEFGTMEDWDELLHEMHERNMKLMMDLVVNHTSDEHNWFIESRKSKDNKYRDYYIWRPGKEGKEPNNWGAAFSGSAWQYDEMTDEYYLHLFSKKQPDLNWDNEKVRQDVYEMMKFWLEKGIDGFRMDVINFISKEEGLPTVETEEEGYVSGHKHFMNGPNIHKYLHEMNEEVLSHYDIMTVGEMPGVTTEEAKLYTGEERKELQMVFQFEHMDLDSGEGGKWDVKPCSLLTLKENLTKWQKALEHTGWNSLYWNNHDQPRVVSRFGNDGMYRIESAKMLATVLHMMKGTPYIYQGEEIGMTNVRFESIDEYRDIETLNMYKEKVMERGEDIEKVMQSIYIKGRDNARTPMQWDDQNHAGFTTGEPWITVNPNYKEINVKQAIQNKDSIFYYYKKLIELRKNNEIVVYGSYDLILENNPSIFAYVRTYGVEKLLVIANFTAEECIFELPEDISYSEVELLIHNYDVENGPIENITLRPYEAMVFKLK.

Ca(2+) contacts are provided by aspartate 21, asparagine 23, aspartate 25, and aspartate 29. The active-site Nucleophile is aspartate 199. Residue glutamate 255 is the Proton donor of the active site.

Belongs to the glycosyl hydrolase 13 family.

The protein resides in the cytoplasm. It carries out the reaction Hydrolysis of (1-&gt;6)-alpha-D-glucosidic linkages in some oligosaccharides produced from starch and glycogen by alpha-amylase, and in isomaltose.. The chain is Oligo-1,6-glucosidase (malL) from Bacillus cereus.